A 683-amino-acid chain; its full sequence is MSEERSKISLRSGGKRKNRPTISAPRQISAPIPQDNGMPQPPPEATMADEPRMTRPRPPPPGGKTSDLVKKRYSTRFGNMPTDFDPSSNPMPALPDLEKYMQAQVGSPPSRGGDAGGLGPMGREPPRVDIRTLRDPNFAPEQYVAEVLGEATEDEIRDYEDALKQLKARAAADLQQNVYQNRTQFIKISKEAEKLKGEMRTLRNLMLELKTNTTALRASSNSADSSGSLGPEFSTGLSKRDRRSSITDRTALWSAQMQALYKSVEGSQKFLPNSQGRHVVQNAGPWIELDNATYKSRRSMQIFLLNDHLLIASRKKRKIDGPGADARGPMTKLVADRCWHLLDVEVVDMAGTGDSSNGRNKLADAIMVRGGGQNESFIYRTEKPEDPEKTTLILNIRKTVEELRRNLQSERDATNKAKETINYFASRDPGLLQKTELLETLSDIKDMLIEVDGKQQNLRWVESQMDELDINIALQQIEPAVARIEMLKNLASGLKNNMIAQDFISFKVDERCARLATLVVRELVNSHNDQKKTKRNVTWLVRLGFEDRAREAYLEARSEVIQKRSRQCIFQGDLHLYIWEISFVYFMVIRNTVICFQSCFPPPMMSACVKWAKEEVDAFNVILARQLSSAEEGGEVWTECVNRAKEHASMLSDVGLDFRNLVGRNVGTSTTVPGGASAGLGLS.

2 disordered regions span residues 1-91 (MSEE…SNPM) and 103-125 (AQVGSPPSRGGDAGGLGPMGREP). The stretch at 145–213 (AEVLGEATED…NLMLELKTNT (69 aa)) forms a coiled coil. The disordered stretch occupies residues 217–242 (RASSNSADSSGSLGPEFSTGLSKRDR). Over residues 219-228 (SSNSADSSGS) the composition is skewed to low complexity. Residues 388-422 (EKTTLILNIRKTVEELRRNLQSERDATNKAKETIN) adopt a coiled-coil conformation.

It belongs to the EXO84 family. Component of the exocyst complex.

It localises to the cytoplasmic vesicle. It is found in the secretory vesicle. Involved in the secretory pathway as part of the exocyst complex which tethers secretory vesicles to the sites of exocytosis. Plays a role in both the assembly of the exocyst and the polarization of this complex to specific sites of the plasma membrane for exocytosis. Also involved in assembly of the spliceosome. The chain is Exocyst complex component exo84 (exo84) from Neurospora crassa (strain ATCC 24698 / 74-OR23-1A / CBS 708.71 / DSM 1257 / FGSC 987).